A 215-amino-acid polypeptide reads, in one-letter code: Pyrrolidone-carboxylate peptidase (215 aa).

Residues glutamate 78, cysteine 141, and histidine 165 contribute to the active site.

The protein belongs to the peptidase C15 family. In terms of assembly, homotetramer.

It localises to the cytoplasm. It catalyses the reaction Release of an N-terminal pyroglutamyl group from a polypeptide, the second amino acid generally not being Pro.. Its function is as follows. Removes 5-oxoproline from various penultimate amino acid residues except L-proline. This is Pyrrolidone-carboxylate peptidase (pcp) from Streptococcus pyogenes serotype M1.